Here is a 366-residue protein sequence, read N- to C-terminus: MNKVVLLCRPGFEKECAAEITDKAGQREIFGFARVKENAGYVIYECYQPDDGDKLIRELPFSSLIFARQWFVVGELLQHLPPEDRITPIVGMLQGVVEKGGELRVEVADTNESKELLKFCRKFTVPLRAALRDAGVLANYETPKRPVVHVFFIAPGCCYTGYSYSSNNSPFYMGIPRLKFPADAPSRSTLKLEEAFHVFIPADEWDERLANGMWAVDLGACPGGWTYQLVKRNMWVYSVDNGPMAQSLMDTGQVTWLREDGFKFRPTRSNISWMVCDMVEKPAKVAALMAQWLVNGWCRETIFNLKLPMKKRYEEVSHNLAYIQAQLDEHGINAQIQARQLYHDREEVTVHVRRIWAAVGGRRDER.

S-adenosyl-L-methionine is bound by residues serine 188, 221-224, aspartate 240, aspartate 260, and aspartate 277; that span reads CPGG. Lysine 306 serves as the catalytic Proton acceptor.

It belongs to the class I-like SAM-binding methyltransferase superfamily. RNA methyltransferase RlmE family. RlmM subfamily. As to quaternary structure, monomer.

Its subcellular location is the cytoplasm. It carries out the reaction cytidine(2498) in 23S rRNA + S-adenosyl-L-methionine = 2'-O-methylcytidine(2498) in 23S rRNA + S-adenosyl-L-homocysteine + H(+). Catalyzes the 2'-O-methylation at nucleotide C2498 in 23S rRNA. This Escherichia coli O127:H6 (strain E2348/69 / EPEC) protein is Ribosomal RNA large subunit methyltransferase M.